Consider the following 123-residue polypeptide: Thioredoxin H-type (123 aa).

The Thioredoxin domain maps to 2–119; the sequence is AATAELIPAG…IEAKLLKHSQ (118 aa). The cysteines at positions 45 and 48 are disulfide-linked.

This sequence belongs to the thioredoxin family. Plant H-type subfamily.

Its subcellular location is the cytoplasm. Its function is as follows. Participates in various redox reactions through the reversible oxidation of the active center dithiol to a disulfide. The H form is known to activate a number of cytosolic enzymes. The polypeptide is Thioredoxin H-type (PEC-2) (Brassica campestris (Field mustard)).